We begin with the raw amino-acid sequence, 340 residues long: Mitochondrial carrier protein CoAc1 (340 aa).

Helical transmembrane passes span alanine 22 to phenylalanine 42, phenylalanine 85 to methionine 105, leucine 130 to leucine 147, glycine 199 to glutamate 219, leucine 237 to valine 257, and phenylalanine 297 to threonine 317. Solcar repeat units follow at residues proline 27 to tryptophan 113, threonine 124 to glutamine 224, and aspartate 231 to leucine 324.

Belongs to the mitochondrial carrier (TC 2.A.29) family. As to expression, expressed throughout the plant.

The protein resides in the mitochondrion inner membrane. Required for the accumulation of coenzyme A in the mitochondrial matrix. The protein is Mitochondrial carrier protein CoAc1 of Zea mays (Maize).